Here is a 447-residue protein sequence, read N- to C-terminus: uncharacterized protein (447 aa).

Disordered regions lie at residues 1 to 80, 115 to 184, and 295 to 322; these read MTFE…EQSS, ATTQ…PNNP, and LQDN…SSGI. Positions 11–32 are enriched in basic and acidic residues; that stretch reads QRRDESAYRLGEEDGRQKGESS. Residues 42–51 are compositionally biased toward polar residues; sequence KNPSNVSFWS. Over residues 61–72 the composition is skewed to basic and acidic residues; the sequence is VKTDRPQFHRAD. Polar residues predominate over residues 115–158; sequence ATTQSSPISTSFNPQLPSNSNTNRFDFGSESQLSSNYTNDTGLS. Residues 300–321 are compositionally biased toward low complexity; sequence SLTSQGSNLSSQNSGLSSSSSG. The next 2 membrane-spanning stretches (helical) occupy residues 385 to 405 and 424 to 444; these read FMFL…ASFL and IINR…IGLG.

It localises to the membrane. This is an uncharacterized protein from Schizosaccharomyces pombe (strain 972 / ATCC 24843) (Fission yeast).